A 369-amino-acid chain; its full sequence is Dual specificity protein phosphatase 1-A (369 aa).

The region spanning 21-138 is the Rhodanese domain; that stretch reads RAHKCLILDC…FSAQCPEFCT (118 aa). Thr-168 bears the Phosphothreonine; by MAPK1 mark. The Tyrosine-protein phosphatase domain occupies 175–316; it reads GPVEILPFLY…LLQFESQVLA (142 aa). The active-site Phosphocysteine intermediate is Cys-260.

It belongs to the protein-tyrosine phosphatase family. Non-receptor class dual specificity subfamily. In terms of processing, phosphorylated by MAPK1/ERK2 at Thr-168 and at one or more serine residues in a progesterone-dependent manner. Phosphorylation reduces its rate of degradation but does not seem to affect phosphatase activity. As to expression, expressed in XIK-2 kidney cells.

It localises to the nucleus. It catalyses the reaction O-phospho-L-seryl-[protein] + H2O = L-seryl-[protein] + phosphate. The catalysed reaction is O-phospho-L-threonyl-[protein] + H2O = L-threonyl-[protein] + phosphate. The enzyme catalyses O-phospho-L-tyrosyl-[protein] + H2O = L-tyrosyl-[protein] + phosphate. Its function is as follows. Dual specificity phosphatase that dephosphorylates MAP kinase MAPK1/ERK2 on both 'Thr-188' and 'Tyr-190', regulating its activity during the meiotic cell cycle. This is Dual specificity protein phosphatase 1-A from Xenopus laevis (African clawed frog).